The following is a 141-amino-acid chain: uncharacterized protein (141 aa).

This sequence belongs to the mimivirus L163/R849 family.

This is an uncharacterized protein from Acanthamoeba polyphaga mimivirus (APMV).